The primary structure comprises 601 residues: Chaperone protein DnaK (601 aa).

Phosphothreonine; by autocatalysis is present on Thr-175. The tract at residues 570-601 is disordered; that stretch reads FAQKAASKETSKNEQNEDGSIDAEIKEEDPKA. The span at 575-584 shows a compositional bias: basic and acidic residues; it reads ASKETSKNEQ. Acidic residues predominate over residues 585-601; it reads NEDGSIDAEIKEEDPKA.

This sequence belongs to the heat shock protein 70 family.

Acts as a chaperone. This chain is Chaperone protein DnaK, found in Mycoplasma mobile (strain ATCC 43663 / 163K / NCTC 11711) (Mesomycoplasma mobile).